A 385-amino-acid chain; its full sequence is Probable tRNA sulfurtransferase (385 aa).

A THUMP domain is found at 57 to 160; sequence DGVIERVKKV…RGNAYVFTDK (104 aa). ATP-binding positions include 180-181, 205-206, arginine 262, glycine 284, and glutamine 293; these read ML and YY.

The protein belongs to the ThiI family.

The protein localises to the cytoplasm. It carries out the reaction [ThiI sulfur-carrier protein]-S-sulfanyl-L-cysteine + a uridine in tRNA + 2 reduced [2Fe-2S]-[ferredoxin] + ATP + H(+) = [ThiI sulfur-carrier protein]-L-cysteine + a 4-thiouridine in tRNA + 2 oxidized [2Fe-2S]-[ferredoxin] + AMP + diphosphate. The enzyme catalyses [ThiS sulfur-carrier protein]-C-terminal Gly-Gly-AMP + S-sulfanyl-L-cysteinyl-[cysteine desulfurase] + AH2 = [ThiS sulfur-carrier protein]-C-terminal-Gly-aminoethanethioate + L-cysteinyl-[cysteine desulfurase] + A + AMP + 2 H(+). It functions in the pathway cofactor biosynthesis; thiamine diphosphate biosynthesis. Functionally, catalyzes the ATP-dependent transfer of a sulfur to tRNA to produce 4-thiouridine in position 8 of tRNAs, which functions as a near-UV photosensor. Also catalyzes the transfer of sulfur to the sulfur carrier protein ThiS, forming ThiS-thiocarboxylate. This is a step in the synthesis of thiazole, in the thiamine biosynthesis pathway. The sulfur is donated as persulfide by IscS. The protein is Probable tRNA sulfurtransferase of Clostridium perfringens (strain 13 / Type A).